The chain runs to 499 residues: Alpha-internexin (499 aa).

A head region spans residues 1 to 87 (MSFGSEHYLC…SQAAARTNEY (87 aa)). Phosphoserine is present on Ser72. The interval 88–129 (KIIRTNEKEQLQGLNDRFAVFIEKVHQLETQNRALEAELAAL) is coil 1A. Residues 94–407 (EKEQLQGLND…KLLEGEETRF (314 aa)) form the IF rod domain. Residues 130-142 (RQRHAEPSRVGEL) are linker 1. Residues 143–238 (FQRELRDLRA…QVHDEEVAEL (96 aa)) are coil 1B. Residue Ser219 is modified to Phosphoserine. A linker 2 region spans residues 239 to 262 (LATLQASSQAAAEVDVTVAKPDLT). Positions 263 to 408 (SALREIRAQY…LLEGEETRFS (146 aa)) are coil 2. Position 290 is an N6-acetyllysine (Lys290). Residue Ser335 is modified to Phosphoserine. The segment at 409 to 499 (TSGLSISGLN…EETTISSQKI (91 aa)) is tail. The segment at 441–466 (STGLSLKKEEEEEEASKVASKKTSQI) is disordered. Ser469 and Ser496 each carry phosphoserine.

The protein belongs to the intermediate filament family. In terms of assembly, forms homodimers (in vitro). Forms heterodimers with NEFL, NEFM or NEFH (in vitro). O-glycosylated. Found predominantly in adult CNS.

In terms of biological role, class-IV neuronal intermediate filament that is able to self-assemble. It is involved in the morphogenesis of neurons. It may form an independent structural network without the involvement of other neurofilaments or it may cooperate with NEFL to form the filamentous backbone to which NEFM and NEFH attach to form the cross-bridges. May also cooperate with the neuronal intermediate filament protein PRPH to form filamentous networks. This is Alpha-internexin (INA) from Homo sapiens (Human).